Reading from the N-terminus, the 1162-residue chain is Protein OBERON 4 (1162 aa).

Composition is skewed to basic and acidic residues over residues 1-19 (MKRL…KNVD), 61-77 (NRDL…HRSE), 90-99 (FRSERERPNR), and 118-134 (VDDR…DRSL). 4 disordered regions span residues 1 to 235 (MKRL…PSCS), 251 to 307 (IGKS…VSQN), 321 to 346 (DHRD…DKDE), and 441 to 485 (SKTE…QSGV). Positions 135–146 (KSPSWSRDSPNE) are enriched in polar residues. Over residues 148–157 (SKFKPLDSRN) the composition is skewed to basic and acidic residues. Positions 163–182 (KSLASPTWSKDSGSEQSKSV) are enriched in polar residues. Over residues 203–213 (EMEEGELEPEP) the composition is skewed to acidic residues. Basic and acidic residues-rich tracts occupy residues 225–235 (TKHDCKLPSCS), 263–300 (SNRE…HATE), 336–346 (DTVDEKGDKDE), and 441–457 (SKTE…KDDN). The segment at 835-899 (ACMCLVCSNF…QFHCVACNHP (65 aa)) adopts a PHD-type zinc-finger fold. A coiled-coil region spans residues 1065–1161 (MKQAEAEMFQ…KMEMTKQSLA (97 aa)).

As to quaternary structure, self-interacts. Interacts with OBE1 and OBE2. Interacts with OBE3.

Its subcellular location is the nucleus. Probable transcription factor that functions redundantly with OBE3 in specification of the hypophysis and establishment of the embryonic root. Involved in the activation of ARF5/MP-dependent gene expression during embryonic root meristem initiation. Involved in shoot meristem homeostasis. The protein is Protein OBERON 4 of Arabidopsis thaliana (Mouse-ear cress).